The chain runs to 215 residues: Ribonuclease T (215 aa).

Residues 20 to 194 (VVIDVETAGF…YDTLQTAKLF (175 aa)) enclose the Exonuclease domain. Residues Asp-23, Glu-25, His-181, and Asp-186 each coordinate Mg(2+). His-181 acts as the Proton donor/acceptor in catalysis.

This sequence belongs to the RNase T family. Homodimer. The cofactor is Mg(2+).

Its function is as follows. Trims short 3' overhangs of a variety of RNA species, leaving a one or two nucleotide 3' overhang. Responsible for the end-turnover of tRNA: specifically removes the terminal AMP residue from uncharged tRNA (tRNA-C-C-A). Also appears to be involved in tRNA biosynthesis. The sequence is that of Ribonuclease T from Yersinia pestis.